Reading from the N-terminus, the 249-residue chain is Dof zinc finger protein DOF4.5 (249 aa).

Residues 25–79 (RVCARCDSDNTKFCYYNNYCEFQPRYFCKNCRRYWTHGGALRNIPIGGSSRAKRA) form a Dof-type zinc finger. Zn(2+)-binding residues include C27, C30, C52, and C55.

It localises to the nucleus. Its function is as follows. Transcription factor that binds specifically to a 5'-AA[AG]G-3' consensus core sequence. In Arabidopsis thaliana (Mouse-ear cress), this protein is Dof zinc finger protein DOF4.5 (DOF4.5).